Here is a 506-residue protein sequence, read N- to C-terminus: Aminoaldehyde dehydrogenase 2 (506 aa).

Na(+) is bound at residue D101. NAD(+)-binding positions include T161 to W163 and K187 to E190. Na(+) is bound at residue L191. NAD(+) is bound by residues S241–T244 and E262. E262 acts as the Proton acceptor in catalysis. C297 serves as the catalytic Nucleophile. NAD(+) contacts are provided by E396 and W462.

The protein belongs to the aldehyde dehydrogenase family.

It catalyses the reaction 4-aminobutanal + NAD(+) + H2O = 4-aminobutanoate + NADH + 2 H(+). The enzyme catalyses 3-aminopropanal + NAD(+) + H2O = beta-alanine + NADH + 2 H(+). The catalysed reaction is 4-(trimethylamino)butanal + NAD(+) + H2O = 4-(trimethylamino)butanoate + NADH + 2 H(+). It carries out the reaction 4-guanidinobutanal + NAD(+) + H2O = 4-guanidinobutanoate + NADH + 2 H(+). Its pathway is amine and polyamine biosynthesis; betaine biosynthesis via choline pathway; betaine from betaine aldehyde: step 1/1. Functionally, dehydrogenase that catalyzes the oxidation of several aminoaldehydes. Metabolizes and detoxifies aldehyde products of polyamine degradation to non-toxic amino acids. Catalyzes the oxidation of 4-aminobutanal and 3-aminopropanal to 4-aminobutanoate and beta-alanine, respectively. Catalyzes the oxidation of 4-(trimethylamino)butanal and 4-guanidinobutanal to 4-trimethylammoniobutanoate and 4-guanidinobutanoate, respectively. The polypeptide is Aminoaldehyde dehydrogenase 2 (Zea mays (Maize)).